We begin with the raw amino-acid sequence, 248 residues long: Urease accessory protein UreG 1 (248 aa).

Over residues 1–14 (MLPEHHDHGHEHGG) the composition is skewed to basic and acidic residues. A disordered region spans residues 1–36 (MLPEHHDHGHEHGGNGHGHGHRHQVNFDPTAAEPDP). 53–60 (GPVGSGKT) contacts GTP.

The protein belongs to the SIMIBI class G3E GTPase family. UreG subfamily. Homodimer. UreD, UreF and UreG form a complex that acts as a GTP-hydrolysis-dependent molecular chaperone, activating the urease apoprotein by helping to assemble the nickel containing metallocenter of UreC. The UreE protein probably delivers the nickel.

The protein resides in the cytoplasm. In terms of biological role, facilitates the functional incorporation of the urease nickel metallocenter. This process requires GTP hydrolysis, probably effectuated by UreG. The chain is Urease accessory protein UreG 1 from Saccharopolyspora erythraea (strain ATCC 11635 / DSM 40517 / JCM 4748 / NBRC 13426 / NCIMB 8594 / NRRL 2338).